The sequence spans 403 residues: Zinc metalloproteinase nas-8 (403 aa).

Positions 1–29 are cleaved as a signal peptide; that stretch reads MRRNDLLNNKITIFLSSLSLFVIIIPIYA. Positions 30 to 111 are excised as a propeptide; sequence AEKDLLPPST…DPKNSESLRR (82 aa). A Peptidase M12A domain is found at 112–307; the sequence is NGVITGTRKW…LKMNLMYQCS (196 aa). 5 disulfide bridges follow: Cys-154-Cys-306, Cys-176-Cys-195, Cys-338-Cys-372, Cys-345-Cys-365, and Cys-352-Cys-369. Position 203 (His-203) interacts with Zn(2+). The active site involves Glu-204. Positions 207 and 213 each coordinate Zn(2+). The ShKT domain occupies 338-372; sequence CRDRTNLCWRWIDRCKSFFFEQIMKEFCSLSCGYC. The N-linked (GlcNAc...) asparagine glycan is linked to Asn-386.

Zn(2+) is required as a cofactor.

Its subcellular location is the secreted. The catalysed reaction is Hydrolysis of peptide bonds in substrates containing five or more amino acids, preferentially with Ala in P1', and Pro in P2'.. Metalloprotease. The chain is Zinc metalloproteinase nas-8 (nas-8) from Caenorhabditis elegans.